Here is a 271-residue protein sequence, read N- to C-terminus: Type II restriction enzyme ScrFI (271 aa).

It carries out the reaction Endonucleolytic cleavage of DNA to give specific double-stranded fragments with terminal 5'-phosphates.. Functionally, a P subtype restriction enzyme that recognizes the double-stranded sequence 5'-CCNGG-3' and cleaves after C-2. This chain is Type II restriction enzyme ScrFI, found in Lactococcus lactis subsp. cremoris (Streptococcus cremoris).